We begin with the raw amino-acid sequence, 208 residues long: FMN-dependent NADH:quinone oxidoreductase 2 (208 aa).

Ser-17–Ser-19 contacts FMN.

The protein belongs to the azoreductase type 1 family. As to quaternary structure, homodimer. It depends on FMN as a cofactor.

It carries out the reaction 2 a quinone + NADH + H(+) = 2 a 1,4-benzosemiquinone + NAD(+). The enzyme catalyses N,N-dimethyl-1,4-phenylenediamine + anthranilate + 2 NAD(+) = 2-(4-dimethylaminophenyl)diazenylbenzoate + 2 NADH + 2 H(+). Quinone reductase that provides resistance to thiol-specific stress caused by electrophilic quinones. In terms of biological role, also exhibits azoreductase activity. Catalyzes the reductive cleavage of the azo bond in aromatic azo compounds to the corresponding amines. This Halalkalibacterium halodurans (strain ATCC BAA-125 / DSM 18197 / FERM 7344 / JCM 9153 / C-125) (Bacillus halodurans) protein is FMN-dependent NADH:quinone oxidoreductase 2.